The sequence spans 141 residues: HTH-type transcriptional repressor NsrR (141 aa).

Residues Q2 to D129 form the HTH rrf2-type domain. The H-T-H motif DNA-binding region spans I28–Q51. Positions 91, 96, and 102 each coordinate [2Fe-2S] cluster.

The cofactor is [2Fe-2S] cluster.

Nitric oxide-sensitive repressor of genes involved in protecting the cell against nitrosative stress. May require iron for activity. This Vibrio vulnificus (strain CMCP6) protein is HTH-type transcriptional repressor NsrR.